The chain runs to 151 residues: Small ribosomal subunit protein uS11 (151 aa).

The protein belongs to the universal ribosomal protein uS11 family.

The polypeptide is Small ribosomal subunit protein uS11 (RPS14) (Podocoryna carnea (Hydrozoan)).